A 378-amino-acid polypeptide reads, in one-letter code: MLIEECPIIGVNVRVWLFWSYLRRPRLSRFLVGCIPVAVLNVFQFLKLYSSWGDMSELIINGYFTVLYFNLVLRTSFLVINRRKFETFFEGVAAEYALLEKNDDIRPVLERYTRRGRMLSISNLWLGAFISACFVTYPLFVPGRGLPYGVTIPGVDVLATPTYQVVFVLQVYLTFPACCMYIPFTSFYATCTLFALVQIAALKQRLGRLGRHSGTMASTGHSAGTLFAELKECLKYHKQIIQYVHDLNSLVTHLCLLEFLSFGMMLCALLFLLSISNQLAQMIMIGSYIFMILSQMFAFYWHANEVLEQSLGIGDAIYNGAWPDFEEPIRKRLILIIARAQRPMVIKVGNVYPMTLEMFQKLLNVSYSYFTLLRRVYN.

Residue methionine 1 is a topological domain, cytoplasmic. A helical transmembrane segment spans residues leucine 2 to leucine 22. Topologically, residues arginine 23 to arginine 29 are extracellular. A helical membrane pass occupies residues phenylalanine 30 to serine 50. The Cytoplasmic portion of the chain corresponds to serine 51–isoleucine 59. A helical transmembrane segment spans residues isoleucine 60–isoleucine 80. The Extracellular portion of the chain corresponds to asparagine 81–serine 120. A helical transmembrane segment spans residues isoleucine 121–valine 141. Residues proline 142–glutamine 164 lie on the Cytoplasmic side of the membrane. Residues valine 165–threonine 185 traverse the membrane as a helical segment. Residues serine 186–leucine 254 lie on the Extracellular side of the membrane. Residues cysteine 255–isoleucine 275 form a helical membrane-spanning segment. Residues serine 276 to glutamine 278 lie on the Cytoplasmic side of the membrane. A helical membrane pass occupies residues leucine 279–phenylalanine 299. Residues tyrosine 300–asparagine 378 are Extracellular-facing. N-linked (GlcNAc...) asparagine glycosylation is present at asparagine 364.

It belongs to the insect chemoreceptor superfamily. Heteromeric odorant receptor channel (TC 1.A.69) family. Or30a subfamily. As to expression, expressed in male and female antennae and maxillary palps.

The protein localises to the cell membrane. Its function is as follows. Odorant receptor which plays a critical role in the anthropophilic host-seeking behavior; establishes the host preference to transmit malaria. The polypeptide is Odorant receptor Or2 (OR2) (Anopheles gambiae (African malaria mosquito)).